Consider the following 378-residue polypeptide: Cobalt-precorrin-5B C(1)-methyltransferase (378 aa).

It belongs to the CbiD family.

It catalyses the reaction Co-precorrin-5B + S-adenosyl-L-methionine = Co-precorrin-6A + S-adenosyl-L-homocysteine. Its pathway is cofactor biosynthesis; adenosylcobalamin biosynthesis; cob(II)yrinate a,c-diamide from sirohydrochlorin (anaerobic route): step 6/10. Catalyzes the methylation of C-1 in cobalt-precorrin-5B to form cobalt-precorrin-6A. This is Cobalt-precorrin-5B C(1)-methyltransferase from Methanococcus aeolicus (strain ATCC BAA-1280 / DSM 17508 / OCM 812 / Nankai-3).